The sequence spans 84 residues: Delta-thalatoxin-Hhe1a (84 aa).

An N-terminal signal peptide occupies residues 1–19 (MAYQKIVFVALMLVLAVSA). A propeptide spanning residues 20 to 33 (MRLPDQQDQDISVA) is cleaved from the precursor. Cystine bridges form between Cys38–Cys78, Cys40–Cys68, and Cys61–Cys79.

This sequence belongs to the sea anemone sodium channel inhibitory toxin family. Type II subfamily.

Its subcellular location is the secreted. It is found in the nematocyst. Binds specifically to the voltage-gated sodium channel (Nav) and delays its inactivation. The chain is Delta-thalatoxin-Hhe1a from Heterodactyla hemprichii (Hemprich's sea anemone).